The chain runs to 190 residues: MAQNGSESGSTLGGVAGRYASALFELAREERAVDAVSEGLDRFDALLKESADLQRLVRSPVFTSEDQVKAIDAVLARAGITGLAANFIRLSAANRRLFVLPDMIRAFRALVRESKGIVQAEVRLAETPSDAVLEEIKASLRDVARAEVDVDLRIDPSLIGGIVVKVGSRMVDASLRTKLNSIRLAMRDAR.

It belongs to the ATPase delta chain family. As to quaternary structure, F-type ATPases have 2 components, F(1) - the catalytic core - and F(0) - the membrane proton channel. F(1) has five subunits: alpha(3), beta(3), gamma(1), delta(1), epsilon(1). F(0) has three main subunits: a(1), b(2) and c(10-14). The alpha and beta chains form an alternating ring which encloses part of the gamma chain. F(1) is attached to F(0) by a central stalk formed by the gamma and epsilon chains, while a peripheral stalk is formed by the delta and b chains.

The protein localises to the cell inner membrane. Its function is as follows. F(1)F(0) ATP synthase produces ATP from ADP in the presence of a proton or sodium gradient. F-type ATPases consist of two structural domains, F(1) containing the extramembraneous catalytic core and F(0) containing the membrane proton channel, linked together by a central stalk and a peripheral stalk. During catalysis, ATP synthesis in the catalytic domain of F(1) is coupled via a rotary mechanism of the central stalk subunits to proton translocation. Functionally, this protein is part of the stalk that links CF(0) to CF(1). It either transmits conformational changes from CF(0) to CF(1) or is implicated in proton conduction. The protein is ATP synthase subunit delta of Methylobacterium nodulans (strain LMG 21967 / CNCM I-2342 / ORS 2060).